The following is an 803-amino-acid chain: MNMFKEAVTFKDVAVAFTEEELGLLGPAQRKLYRDVMVENFRNLLSVGHPPFKQDVSPIERNEQLWIMTTATRRQGNLGEKNQSKLITVQDRESEEELSCWQIWQQIANDLTRCQDSMINNSQCHKQGDFPYQVGTELSIQISEDENYIVNKADGPNNTGNPEFPILRTQDSWRKTFLTESQRLNRDQQISIKNKLCQCKKGVDPIGWISHHDGHRVHKSEKSYRPNDYEKDNMKILTFDHNSMIHTGQKSYQCNECKKPFSDLSSFDLHQQLQSGEKSLTCVERGKGFCYSPVLPVHQKVHVGEKLKCDECGKEFSQGAHLQTHQKVHVIEKPYKCKQCGKGFSRRSALNVHCKVHTAEKPYNCEECGRAFSQASHLQDHQRLHTGEKPFKCDACGKSFSRNSHLQSHQRVHTGEKPYKCEECGKGFICSSNLYIHQRVHTGEKPYKCEECGKGFSRPSSLQAHQGVHTGEKSYICTVCGKGFTLSSNLQAHQRVHTGEKPYKCNECGKSFRRNSHYQVHLVVHTGEKPYKCEICGKGFSQSSYLQIHQKAHSIEKPFKCEECGQGFNQSSRLQIHQLIHTGEKPYKCEECGKGFSRRADLKIHCRIHTGEKPYNCEECGKVFRQASNLLAHQRVHSGEKPFKCEECGKSFGRSAHLQAHQKVHTGDKPYKCDECGKGFKWSLNLDMHQRVHTGEKPYKCGECGKYFSQASSLQLHQSVHTGEKPYKCDVCGKVFSRSSQLQSHQRVHTGEKPYKCEICGKSFSWRSNLTVHHRIHVGDKSYKSNRGGKNIRESTQEKKSIK.

Residues 8–78 (VTFKDVAVAF…TTATRRQGNL (71 aa)) form the KRAB domain. Residues 252 to 274 (YQCNECKKPFSDLSSFDLHQQLQ) form a C2H2-type 1; degenerate zinc finger. The C2H2-type 2; degenerate zinc finger occupies 280–302 (LTCVERGKGFCYSPVLPVHQKVH). 17 C2H2-type zinc fingers span residues 307–329 (LKCD…QKVH), 335–357 (YKCK…CKVH), 363–385 (YNCE…QRLH), 391–413 (FKCD…QRVH), 419–441 (YKCE…QRVH), 447–469 (YKCE…QGVH), 475–497 (YICT…QRVH), 503–525 (YKCN…LVVH), 531–553 (YKCE…QKAH), 559–581 (FKCE…QLIH), 587–609 (YKCE…CRIH), 615–637 (YNCE…QRVH), 643–665 (FKCE…QKVH), 671–693 (YKCD…QRVH), 699–721 (YKCG…QSVH), 727–749 (YKCD…QRVH), and 755–777 (YKCE…HRIH). Residues 781 to 803 (KSYKSNRGGKNIRESTQEKKSIK) are disordered. Basic and acidic residues predominate over residues 791–803 (NIRESTQEKKSIK).

It belongs to the krueppel C2H2-type zinc-finger protein family.

The protein localises to the nucleus. Functionally, may be involved in transcriptional regulation. The sequence is that of Zinc finger protein 226 (ZNF226) from Homo sapiens (Human).